A 436-amino-acid chain; its full sequence is Chromosomal replication initiator protein DnaA (436 aa).

The tract at residues 1–80 is domain I, interacts with DnaA modulators; the sequence is MSHEAVWQHV…QAPRFELRVV (80 aa). Residues 80–100 form a domain II region; that stretch reads VPGVVVQEDIFQAAPAEAPRP. Residues 101-317 form a domain III, AAA+ region region; it reads KLNPKYTFEN…GALMRAIAFA (217 aa). ATP is bound by residues glycine 145, glycine 147, lysine 148, and threonine 149. Positions 318-436 are domain IV, binds dsDNA; the sequence is SLNGVELTRA…LLRTLREACT (119 aa).

This sequence belongs to the DnaA family. As to quaternary structure, oligomerizes as a right-handed, spiral filament on DNA at oriC.

It is found in the cytoplasm. It catalyses the reaction ATP + H2O = ADP + phosphate + H(+). Its function is as follows. Plays an essential role in the initiation and regulation of chromosomal replication. ATP-DnaA binds to the origin of replication (oriC) to initiate formation of the DNA replication initiation complex once per cell cycle. Binds the DnaA box (a 9 base pair repeat at the origin) and separates the double-stranded (ds)DNA. Forms a right-handed helical filament on oriC DNA; dsDNA binds to the exterior of the filament while single-stranded (ss)DNA is stabiized in the filament's interior. The ATP-DnaA-oriC complex binds and stabilizes one strand of the AT-rich DNA unwinding element (DUE), permitting loading of DNA polymerase. After initiation quickly degrades to an ADP-DnaA complex that is not apt for DNA replication. Binds acidic phospholipids. In terms of biological role, the DnaA box consensus is 5'-TTATC[CA]A[CA]A-3' in this bacterium; oriC consists of 13 clustered DnaA boxes and a 40 base pair AT-rich region. ATP-DnaA binds cooperatively to multiple DnaA boxes, while ADP-DnaA binds with low cooperativity to the individual DnaA boxes. About 16-18 DnaA protein molecules bind their sites in oriC. Has a slow ATPase activity. Binds linear and supercoiled DNA. The chain is Chromosomal replication initiator protein DnaA from Thermus thermophilus (strain ATCC 27634 / DSM 579 / HB8).